Reading from the N-terminus, the 959-residue chain is E3 ubiquitin-protein ligase arkadia-B (959 aa).

The span at 51-66 (CSDTNKQQSDLNSNGT) shows a compositional bias: polar residues. Disordered regions lie at residues 51 to 171 (CSDT…VSSL), 189 to 212 (RKRF…MLQR), and 225 to 271 (LLPS…SGGM). Residues 112–131 (SSFSDCISSPSSSSHFGDSD) show a composition bias toward low complexity. Residues 142-156 (PLSSVNSTPRTQSAR) show a composition bias toward polar residues. Residues 228-246 (SSSSSSENDLSSESSSSSS) are compositionally biased toward low complexity. The segment covering 256-267 (TGENRQDGTTLP) has biased composition (polar residues). The SUMO interaction motif 1 (SIM) signature appears at 275 to 279 (VVVIE). The short motif at 300–306 (EVEIVTV) is the SUMO interaction motif 2 (SIM) element. The interval 318–341 (HPRSHWGQNSQSGRTQEQRTRNRV) is disordered. Residues 323–332 (WGQNSQSGRT) show a composition bias toward polar residues. The SUMO interaction motif 3 (SIM) signature appears at 355-359 (VVDLT). A compositionally biased stretch (polar residues) spans 370 to 397 (TTSGRVESQPVSIVSSLTSTSEPASDSM). 4 disordered regions span residues 370-399 (TTSG…SMSG), 475-499 (HFPH…SFRD), 615-649 (PRPL…MDYV), and 661-680 (PSLT…HLSA). Positions 475–487 (HFPHHHHHHHHSS) are enriched in basic residues. Residues 620–632 (HQTSSCPHSNSAS) are compositionally biased toward polar residues. Residues 633–646 (QPPPPPPPPPPPPM) are compositionally biased toward pro residues. The segment at 872–874 (YPH) is ubiquitin binding. Cysteine 907 and cysteine 910 together coordinate Zn(2+). The RING-type; atypical zinc-finger motif lies at 907-948 (CTICLSILEEGEDVRRLPCMHLFHQVCVDQWLITNKKCPICR). The interval 922-926 (RLPCM) is ubiquitin binding. Histidine 930 and cysteine 933 together coordinate Zn(2+).

Belongs to the Arkadia family. Monomer.

The protein localises to the nucleus. Its subcellular location is the cytoplasm. It localises to the PML body. The enzyme catalyses S-ubiquitinyl-[E2 ubiquitin-conjugating enzyme]-L-cysteine + [acceptor protein]-L-lysine = [E2 ubiquitin-conjugating enzyme]-L-cysteine + N(6)-ubiquitinyl-[acceptor protein]-L-lysine.. It functions in the pathway protein modification; protein ubiquitination. Binds free ubiquitin non-covalently via its RING-type zinc finger. Ubiquitin-binding leads to enhance the E3 ubiquitin-protein ligase activity by stabilizing the ubiquitin-conjugating enzyme E2 (donor ubiquitin) in the 'closed' conformation and activating ubiquitin transfer. Functionally, E3 ubiquitin-protein ligase required for mesoderm patterning during embryonic development. Acts as an enhancer of the transcriptional responses of the smad2/smad3 effectors, which are activated downstream of BMP. Acts by mediating ubiquitination and degradation of SMAD inhibitors such as smad7, inducing their proteasomal degradation and thereby enhancing the transcriptional activity of TGF-beta and BMP. Specifically binds polysumoylated chains via SUMO interaction motifs (SIMs) and mediates ubiquitination of sumoylated substrates. The regulation of the BMP-SMAD signaling is however independent of sumoylation and is not dependent of SUMO interaction motifs (SIMs). The polypeptide is E3 ubiquitin-protein ligase arkadia-B (rnf111-b) (Xenopus laevis (African clawed frog)).